A 385-amino-acid polypeptide reads, in one-letter code: tRNA-specific 2-thiouridylase MnmA (385 aa).

Residues 18–25 (AMSGGVDS) and Leu-44 each bind ATP. The active-site Nucleophile is the Cys-112. An intrachain disulfide couples Cys-112 to Cys-209. Gly-136 contacts ATP. The interval 159 to 161 (RDQ) is interaction with tRNA. Catalysis depends on Cys-209, which acts as the Cysteine persulfide intermediate.

This sequence belongs to the MnmA/TRMU family.

Its subcellular location is the cytoplasm. It carries out the reaction S-sulfanyl-L-cysteinyl-[protein] + uridine(34) in tRNA + AH2 + ATP = 2-thiouridine(34) in tRNA + L-cysteinyl-[protein] + A + AMP + diphosphate + H(+). Its function is as follows. Catalyzes the 2-thiolation of uridine at the wobble position (U34) of tRNA, leading to the formation of s(2)U34. This is tRNA-specific 2-thiouridylase MnmA from Methylorubrum populi (strain ATCC BAA-705 / NCIMB 13946 / BJ001) (Methylobacterium populi).